The following is a 546-amino-acid chain: Membrane protein insertase YidC (546 aa).

Residues 8 to 28 traverse the membrane as a helical segment; it reads ILLATVLSVGILILWQVIFPT. Positions 31–70 are disordered; it reads VPPKPAPPPAAEVAKPAAPASPAPGAAAPAVPAPPPDAPE. Over residues 41-60 the composition is skewed to low complexity; it reads AEVAKPAAPASPAPGAAAPA. 5 consecutive transmembrane segments (helical) span residues 326–346, 356–376, 422–442, 459–479, and 498–518; these read IDYG…LYVM, WGVA…PLTY, LGGC…YAAL, LTAH…SFVM, and FFPG…TLYI.

It belongs to the OXA1/ALB3/YidC family. Type 1 subfamily. Interacts with the Sec translocase complex via SecD. Specifically interacts with transmembrane segments of nascent integral membrane proteins during membrane integration.

The protein localises to the cell inner membrane. In terms of biological role, required for the insertion and/or proper folding and/or complex formation of integral membrane proteins into the membrane. Involved in integration of membrane proteins that insert both dependently and independently of the Sec translocase complex, as well as at least some lipoproteins. Aids folding of multispanning membrane proteins. This is Membrane protein insertase YidC from Anaeromyxobacter sp. (strain K).